The sequence spans 192 residues: Large ribosomal subunit protein uL5 (192 aa).

This sequence belongs to the universal ribosomal protein uL5 family. Part of the 50S ribosomal subunit; part of the 5S rRNA/L5/L18/L25 subcomplex. Contacts the 5S rRNA and the P site tRNA. Forms a bridge to the 30S subunit in the 70S ribosome.

In terms of biological role, this is one of the proteins that bind and probably mediate the attachment of the 5S RNA into the large ribosomal subunit, where it forms part of the central protuberance. In the 70S ribosome it contacts protein S13 of the 30S subunit (bridge B1b), connecting the 2 subunits; this bridge is implicated in subunit movement. Contacts the P site tRNA; the 5S rRNA and some of its associated proteins might help stabilize positioning of ribosome-bound tRNAs. This chain is Large ribosomal subunit protein uL5, found in Paenarthrobacter aurescens (strain TC1).